We begin with the raw amino-acid sequence, 342 residues long: Dysbindin (342 aa).

Ser-11 is modified (phosphoserine). The stretch at 83–180 (LSAHWEKKQA…AELDAEHSQK (98 aa)) forms a coiled coil. Residues 243–256 (LMDISDQEALDVFL) carry the Nuclear export signal motif. The tract at residues 263–342 (NTLLSPISGP…ATLHSDDSDS (80 aa)) is disordered. Residues 286–305 (PTPSQAPATPPSSSSPGTDP) are compositionally biased toward low complexity. A phosphoserine mark is found at Ser-316, Ser-321, and Ser-340.

This sequence belongs to the dysbindin family. As to quaternary structure, interacts (via its coiled coil domain) with KXD1. Interacts with CMYA5, PI4K2 and RNF151. Component of the biogenesis of lysosome-related organelles complex 1 (BLOC-1) composed of at least BLOC1S1, BLOC1S2, BLOC1S3, BLOC1S4, BLOC1S5, BLOC1S6, DTNBP1/BLOC1S7 and SNAPIN/BLOC1S8. Interacts directly in the complex with BLOC1S5, BLOC1S6 and SNAPIN/BLOC1S8. The BLOC-1 complex associates with the AP-3 protein complex and membrane protein cargos. This BLOC-1 complex also associates with the BLOC-2 complex in endosomes. Binds to DTNA and DTNB but may not be a physiological binding partner. Interacts with the DNA-dependent protein kinase complex DNA-PK; the interaction phosphorylates DTNBP1 in vitro. Interacts directly in this complex with XRCC5 and XRCC6. Interacts with AP3M1, AP3B2 and TRIM32. Interacts with XPO1; the interaction exports DTNBP1 out of the nucleus. Post-translationally, ubiquitinated by TRIM32. Ubiquitination leads to DTNBP1 degradation.

Its subcellular location is the cytoplasm. The protein localises to the cytoplasmic vesicle membrane. It is found in the cytoplasmic vesicle. It localises to the secretory vesicle. The protein resides in the synaptic vesicle membrane. Its subcellular location is the endosome membrane. The protein localises to the melanosome membrane. It is found in the nucleus. It localises to the postsynaptic density. The protein resides in the presynaptic cell membrane. Its subcellular location is the endoplasmic reticulum. Functionally, component of the BLOC-1 complex, a complex that is required for normal biogenesis of lysosome-related organelles (LRO), such as platelet dense granules and melanosomes. In concert with the AP-3 complex, the BLOC-1 complex is required to target membrane protein cargos into vesicles assembled at cell bodies for delivery into neurites and nerve terminals. The BLOC-1 complex, in association with SNARE proteins, is also proposed to be involved in neurite extension. Associates with the BLOC-2 complex to facilitate the transport of TYRP1 independent of AP-3 function. Plays a role in synaptic vesicle trafficking and in neurotransmitter release. Plays a role in the regulation of cell surface exposure of DRD2. May play a role in actin cytoskeleton reorganization and neurite outgrowth. May modulate MAPK8 phosphorylation. Appears to promote neuronal transmission and viability through regulating the expression of SNAP25 and SYN1, modulating PI3-kinase-Akt signaling and influencing glutamatergic release. Regulates the expression of SYN1 through binding to its promoter. Modulates prefrontal cortical activity via the dopamine/D2 pathway. The protein is Dysbindin (DTNBP1) of Bos taurus (Bovine).